The chain runs to 149 residues: uncharacterized protein (149 aa).

The N-acetyltransferase domain occupies 2–146 (LEVKTISVED…NHIVMYKTLR (145 aa)).

This sequence belongs to the acetyltransferase family.

This is an uncharacterized protein from Bacillus subtilis (strain 168).